Reading from the N-terminus, the 363-residue chain is UDP-3-O-acylglucosamine N-acyltransferase (363 aa).

The active-site Proton acceptor is His-259.

It belongs to the transferase hexapeptide repeat family. LpxD subfamily. In terms of assembly, homotrimer.

The catalysed reaction is a UDP-3-O-[(3R)-3-hydroxyacyl]-alpha-D-glucosamine + a (3R)-hydroxyacyl-[ACP] = a UDP-2-N,3-O-bis[(3R)-3-hydroxyacyl]-alpha-D-glucosamine + holo-[ACP] + H(+). It functions in the pathway bacterial outer membrane biogenesis; LPS lipid A biosynthesis. Catalyzes the N-acylation of UDP-3-O-acylglucosamine using 3-hydroxyacyl-ACP as the acyl donor. Is involved in the biosynthesis of lipid A, a phosphorylated glycolipid that anchors the lipopolysaccharide to the outer membrane of the cell. The chain is UDP-3-O-acylglucosamine N-acyltransferase from Ruegeria pomeroyi (strain ATCC 700808 / DSM 15171 / DSS-3) (Silicibacter pomeroyi).